The chain runs to 390 residues: Succinate--CoA ligase [ADP-forming] subunit beta (390 aa).

In terms of domain architecture, ATP-grasp spans 9 to 245 (KHLLKKYNIP…TTQEDEHETM (237 aa)). ATP is bound by residues Lys46, 53–55 (GRG), Glu99, Ser102, and Glu107. Mg(2+)-binding residues include Asn200 and Asp214. Residues Asn265 and 322–324 (GIV) contribute to the substrate site.

This sequence belongs to the succinate/malate CoA ligase beta subunit family. In terms of assembly, heterotetramer of two alpha and two beta subunits. Requires Mg(2+) as cofactor.

The catalysed reaction is succinate + ATP + CoA = succinyl-CoA + ADP + phosphate. The enzyme catalyses GTP + succinate + CoA = succinyl-CoA + GDP + phosphate. It functions in the pathway carbohydrate metabolism; tricarboxylic acid cycle; succinate from succinyl-CoA (ligase route): step 1/1. Its function is as follows. Succinyl-CoA synthetase functions in the citric acid cycle (TCA), coupling the hydrolysis of succinyl-CoA to the synthesis of either ATP or GTP and thus represents the only step of substrate-level phosphorylation in the TCA. The beta subunit provides nucleotide specificity of the enzyme and binds the substrate succinate, while the binding sites for coenzyme A and phosphate are found in the alpha subunit. The chain is Succinate--CoA ligase [ADP-forming] subunit beta from Coxiella burnetii (strain Dugway 5J108-111).